The sequence spans 155 residues: Ribosome maturation factor RimP (155 aa).

This sequence belongs to the RimP family.

The protein localises to the cytoplasm. Its function is as follows. Required for maturation of 30S ribosomal subunits. The chain is Ribosome maturation factor RimP from Staphylococcus saprophyticus subsp. saprophyticus (strain ATCC 15305 / DSM 20229 / NCIMB 8711 / NCTC 7292 / S-41).